Consider the following 374-residue polypeptide: C-C chemokine receptor type 6 (374 aa).

Over 1-47 the chain is Extracellular; that stretch reads MSGESMNFSDVFDSSEDYFVSVNTSYYSVDSEMLLCSLQEVRQFSRL. Residues Asn-7 and Asn-23 are each glycosylated (N-linked (GlcNAc...) asparagine). The helical transmembrane segment at 48–74 threads the bilayer; that stretch reads FVPIAYSLICVFGLLGNILVVITFAFY. Topologically, residues 75 to 83 are cytoplasmic; the sequence is KKARSMTDV. Residues 84 to 104 form a helical membrane-spanning segment; the sequence is YLLNMAIADILFVLTLPFWAV. The Extracellular portion of the chain corresponds to 105 to 119; it reads SHATGAWVFSNATCK. A disulfide bond links Cys-118 and Cys-197. The helical transmembrane segment at 120–141 threads the bilayer; sequence LLKGIYAINFNCGMLLLTCISM. Residues 142 to 159 lie on the Cytoplasmic side of the membrane; sequence DRYIAIVQATKSFRLRSR. The chain crosses the membrane as a helical span at residues 160–180; sequence TLPRSKIICLVVWGLSVIISS. Residues 181-211 are Extracellular-facing; it reads STFVFNQKYNTQGSDVCEPKYQTVSEPIRWK. A helical transmembrane segment spans residues 212-238; it reads LLMLGLELLFGFFIPLMFMIFCYTFIV. At 239–254 the chain is on the cytoplasmic side; sequence KTLVQAQNSKRHKAIR. A helical transmembrane segment spans residues 255-279; that stretch reads VIIAVVLVFLACQIPHNMVLLVTAA. The Extracellular segment spans residues 280–303; sequence NLGKMNRSCQSEKLIGYTKTVTEV. Residues 304–321 traverse the membrane as a helical segment; sequence LAFLHCCLNPVLYAFIGQ. At 322-374 the chain is on the cytoplasmic side; the sequence is KFRNYFLKILKDLWCVRRKYKSSGFSCAGRYSENISRQTSETADNDNASSFTM.

The protein belongs to the G-protein coupled receptor 1 family. Sperm. Mainly localized in the tail and in the postacrosomal region but is also found in the midpiece and basal region in a small percentage of sperm cells. Reduced levels found in the sperms of asthenozoospermia and leukocytospermia patients (at protein level). Spleen, lymph nodes, appendix, and fetal liver. Expressed in lymphocytes, T-cells and B-cells but not in natural killer cells, monocytes or granulocytes.

The protein localises to the cell membrane. Its subcellular location is the cell surface. Functionally, receptor for the C-C type chemokine CCL20. Binds to CCL20 and subsequently transduces a signal by increasing the intracellular calcium ion levels. Although CCL20 is its major ligand it can also act as a receptor for non-chemokine ligands such as beta-defensins. Binds to defensin DEFB1 leading to increase in intracellular calcium ions and cAMP levels. Its binding to DEFB1 is essential for the function of DEFB1 in regulating sperm motility and bactericidal activity. Binds to defensins DEFB4 and DEFB4A/B and mediates their chemotactic effects. The ligand-receptor pair CCL20-CCR6 is responsible for the chemotaxis of dendritic cells (DC), effector/ memory T-cells and B-cells and plays an important role at skin and mucosal surfaces under homeostatic and inflammatory conditions, as well as in pathology, including cancer and various autoimmune diseases. CCR6-mediated signals are essential for immune responses to microbes in the intestinal mucosa and in the modulation of inflammatory responses initiated by tissue insult and trauma. CCR6 is essential for the recruitment of both the pro-inflammatory IL17 producing helper T-cells (Th17) and the regulatory T-cells (Treg) to sites of inflammation. Required for the normal migration of Th17 cells in Peyers-patches and other related tissue sites of the intestine and plays a role in regulating effector T-cell balance and distribution in inflamed intestine. Plays an important role in the coordination of early thymocyte precursor migration events important for normal subsequent thymocyte precursor development, but is not required for the formation of normal thymic natural regulatory T-cells (nTregs). Required for optimal differentiation of DN2 and DN3 thymocyte precursors. Essential for B-cell localization in the subepithelial dome of Peyers-patches and for efficient B-cell isotype switching to IgA in the Peyers-patches. Essential for appropriate anatomical distribution of memory B-cells in the spleen and for the secondary recall response of memory B-cells. Positively regulates sperm motility and chemotaxis via its binding to CCL20. This Homo sapiens (Human) protein is C-C chemokine receptor type 6 (CCR6).